A 377-amino-acid polypeptide reads, in one-letter code: Queuine tRNA-ribosyltransferase (377 aa).

Catalysis depends on Asp91, which acts as the Proton acceptor. Substrate contacts are provided by residues 91–95, Asp145, Gln189, and Gly216; that span reads DSGGF. The segment at 247-253 is RNA binding; that stretch reads GVGKPED. Catalysis depends on Asp266, which acts as the Nucleophile. An RNA binding; important for wobble base 34 recognition region spans residues 271-275; the sequence is TRNAR. Residues Cys304, Cys306, Cys309, and His335 each contribute to the Zn(2+) site.

This sequence belongs to the queuine tRNA-ribosyltransferase family. As to quaternary structure, homodimer. Within each dimer, one monomer is responsible for RNA recognition and catalysis, while the other monomer binds to the replacement base PreQ1. Zn(2+) serves as cofactor.

The catalysed reaction is 7-aminomethyl-7-carbaguanine + guanosine(34) in tRNA = 7-aminomethyl-7-carbaguanosine(34) in tRNA + guanine. It participates in tRNA modification; tRNA-queuosine biosynthesis. Catalyzes the base-exchange of a guanine (G) residue with the queuine precursor 7-aminomethyl-7-deazaguanine (PreQ1) at position 34 (anticodon wobble position) in tRNAs with GU(N) anticodons (tRNA-Asp, -Asn, -His and -Tyr). Catalysis occurs through a double-displacement mechanism. The nucleophile active site attacks the C1' of nucleotide 34 to detach the guanine base from the RNA, forming a covalent enzyme-RNA intermediate. The proton acceptor active site deprotonates the incoming PreQ1, allowing a nucleophilic attack on the C1' of the ribose to form the product. After dissociation, two additional enzymatic reactions on the tRNA convert PreQ1 to queuine (Q), resulting in the hypermodified nucleoside queuosine (7-(((4,5-cis-dihydroxy-2-cyclopenten-1-yl)amino)methyl)-7-deazaguanosine). The protein is Queuine tRNA-ribosyltransferase of Vibrio parahaemolyticus serotype O3:K6 (strain RIMD 2210633).